Here is a 118-residue protein sequence, read N- to C-terminus: MSGKNNIISQLEAEQMTKEIPAFAPGDTVVVQVRVTEGNRERLQAFEGVVIGKRNRGMNSSFTVRKISYGVGVERTFQTYSKLIDSVSVKRRGDVRQAKLYYLRDLSGKAARIKEKLN.

The protein belongs to the bacterial ribosomal protein bL19 family.

This protein is located at the 30S-50S ribosomal subunit interface and may play a role in the structure and function of the aminoacyl-tRNA binding site. In Marinobacter nauticus (strain ATCC 700491 / DSM 11845 / VT8) (Marinobacter aquaeolei), this protein is Large ribosomal subunit protein bL19.